A 399-amino-acid polypeptide reads, in one-letter code: Developmentally-regulated G-protein 2 (399 aa).

One can recognise an OBG-type G domain in the interval 63–288 (GRVALIGFPS…LLARMWDEMG (226 aa)). Residues 69 to 76 (GFPSVGKS), 115 to 119 (DLPGI), and 246 to 249 (NKID) contribute to the GTP site. The TGS domain occupies 288 to 366 (GLVRVYSKPQ…EDEDVVQIVK (79 aa)). The interval 372 to 399 (EGGRGRFKSHSNAPARIADREKKAPLKQ) is disordered. A compositionally biased stretch (basic and acidic residues) spans 388 to 399 (IADREKKAPLKQ).

It belongs to the TRAFAC class OBG-HflX-like GTPase superfamily. OBG GTPase family.

The protein resides in the cytoplasm. In terms of biological role, binds GDP and GTP, and has low GTPase activity. In Arabidopsis thaliana (Mouse-ear cress), this protein is Developmentally-regulated G-protein 2 (DRG2).